The primary structure comprises 689 residues: Protein asunder (689 aa).

The stretch at 521–550 forms a coiled coil; the sequence is NGARLKLSKAKDQYRLLYRELEQLIQLNAT. Residues 578–619 are disordered; sequence GASLLRSYTESPLSPERLEPITSGSASGSSNSNSLLKASKRR. Residues 600-614 show a composition bias toward low complexity; it reads SGSASGSSNSNSLLK. Residues 613-619 carry the Nuclear localization signal (NLS) motif; sequence LKASKRR.

This sequence belongs to the Integrator subunit 13 family. As to quaternary structure, belongs to the multiprotein complex Integrator, at least composed of IntS1, IntS2, IntS3, IntS4, omd/IntS5, IntS6, defl/IntS7, IntS8, IntS9, IntS10, IntS11, IntS12, asun/IntS13, IntS14 and IntS15. The core complex associates with protein phosphatase 2A subunits mts/PP2A and Pp2A-29B, to form the Integrator-PP2A (INTAC) complex. Post-translationally, phosphorylated.

It localises to the nucleus. The protein localises to the cytoplasm. Its subcellular location is the perinuclear region. Its function is as follows. Component of the integrator complex, a multiprotein complex that terminates RNA polymerase II (Pol II) transcription in the promoter-proximal region of genes. The integrator complex provides a quality checkpoint during transcription elongation by driving premature transcription termination of transcripts that are unfavorably configured for transcriptional elongation: the complex terminates transcription by (1) catalyzing dephosphorylation of the C-terminal domain (CTD) of Pol II subunit Polr2A/Rbp1 and Spt5, and (2) degrading the exiting nascent RNA transcript via endonuclease activity. The integrator complex is also involved in the 3'-end processing of the U7 snRNA, and also the spliceosomal snRNAs U1, U2, U4 and U5. This Drosophila erecta (Fruit fly) protein is Protein asunder (asun).